Here is a 414-residue protein sequence, read N- to C-terminus: MDVNQPKQEHLLALKVMRLTKPTLFTNIPVTCEEKDLPGDLFSTLMKDDPSTVKGAEILMLGEMLTLPQNFGNIFLGETFSSYISVHNDSNQVVKDVQVKADLQTSSQRLNLSASSAVVADLKPDSCIDDVIHHEVKEIGTHILVCAVSYTIQSGEKMYFRKFFKFQVLKPLDVKTKFYNAETDEVFLEAQIQNITTSPMFMEKVSLEPSIMYNVSELNTVITNGDWKGSSTFGTKTYLQPLDTRQYLYCLKPKPEFAEKAGVIKGVTVIGKLDIVWKTNLGERGRLQTSQLQRMAPGYGDVRLSIETIPDTVRLEEPFDITCKITNCSSERTMDLVLEMCNTNAIHWSGVSGRQLGKLHPSSSLHLTLTLLSSVQGLQSVSGLRLTDTFLKRTYEYDDIAQVCVVSSKLQAES.

It belongs to the TRAPPC13 family. Part of the multisubunit TRAPP (transport protein particle) complex.

This is Trafficking protein particle complex subunit 13 (trappc13) from Xenopus laevis (African clawed frog).